The following is a 347-amino-acid chain: Quinolinate synthase (347 aa).

The iminosuccinate site is built by His47 and Ser68. Residue Cys113 coordinates [4Fe-4S] cluster. Iminosuccinate-binding positions include 139-141 (YAN) and Ser156. Cys200 provides a ligand contact to [4Fe-4S] cluster. Residues 226–228 (HPE) and Thr243 contribute to the iminosuccinate site. Cys297 contacts [4Fe-4S] cluster.

The protein belongs to the quinolinate synthase family. Type 1 subfamily. It depends on [4Fe-4S] cluster as a cofactor.

The protein resides in the cytoplasm. It catalyses the reaction iminosuccinate + dihydroxyacetone phosphate = quinolinate + phosphate + 2 H2O + H(+). It participates in cofactor biosynthesis; NAD(+) biosynthesis; quinolinate from iminoaspartate: step 1/1. Functionally, catalyzes the condensation of iminoaspartate with dihydroxyacetone phosphate to form quinolinate. The chain is Quinolinate synthase from Escherichia coli O7:K1 (strain IAI39 / ExPEC).